We begin with the raw amino-acid sequence, 479 residues long: Glutamate--tRNA ligase 2 (479 aa).

The 'HIGH' region signature appears at 18-28 (PSPTGFLHIGG). The 'KMSKS' region signature appears at 244-248 (KLSKR). Residue Lys-247 coordinates ATP.

The protein belongs to the class-I aminoacyl-tRNA synthetase family. Glutamate--tRNA ligase type 1 subfamily. In terms of assembly, monomer.

Its subcellular location is the cytoplasm. It catalyses the reaction tRNA(Glu) + L-glutamate + ATP = L-glutamyl-tRNA(Glu) + AMP + diphosphate. In terms of biological role, catalyzes the attachment of glutamate to tRNA(Glu) in a two-step reaction: glutamate is first activated by ATP to form Glu-AMP and then transferred to the acceptor end of tRNA(Glu). The chain is Glutamate--tRNA ligase 2 from Maricaulis maris (strain MCS10) (Caulobacter maris).